The following is a 1097-amino-acid chain: Apolipoprotein B receptor (1097 aa).

Disordered stretches follow at residues 64–249 (QEDL…KGEE), 262–376 (AWGT…WTTS), 410–739 (EEEG…SRRG), 789–866 (GWDS…ARAE), and 889–1097 (VGWQ…PKPQ). 3 stretches are compositionally biased toward basic and acidic residues: residues 83–92 (GPGDDRRHEV), 158–177 (ERQESHEQEVNREERLRSWE), and 185–208 (VRAREPGMARGAESEWTWHGETEG). The span at 209-218 (KAGAVGPKAA) shows a compositional bias: low complexity. Composition is skewed to basic and acidic residues over residues 219 to 232 (GDNREMEQGVREAD) and 279 to 302 (GREEARTTPGREEARAILDGEEAR). A compositionally biased stretch (low complexity) spans 312–330 (TASGGEEAETASGGEEAGT). Residues 331–362 (ASGGEEAGIASGGEAGTASGGEEAGTASGGEE) show a composition bias toward gly residues. At Ser-458 the chain carries Phosphoserine. Composition is skewed to basic and acidic residues over residues 463 to 487 (VDLRGKEAEMRQDLGIRADRARMEE) and 496 to 505 (EERGSSRDPV). Position 510 is a phosphoserine (Ser-510). A Phosphothreonine modification is found at Thr-572. Phosphoserine is present on Ser-594. Composition is skewed to basic and acidic residues over residues 594 to 606 (SKEEQERSLEAGP) and 626 to 637 (NRTRKDMERGNT). The segment covering 640 to 652 (DAADGEQREEEET) has biased composition (acidic residues). 3 stretches are compositionally biased toward basic and acidic residues: residues 791–800 (DSKEKEEAAA), 892–918 (QEREQREDSEGRCGDYHPEGEAPRLLD), and 928–950 (RRAEAKETEPESLEHVRGQEEQP). Residues 1000–1017 (SRVHLSRSSSQRRSRPSF) are compositionally biased toward basic residues. Over residues 1041–1050 (APEQRPLQLE) the composition is skewed to low complexity.

As to quaternary structure, homodimer. Post-translationally, there are 2 forms in macrophages, the membrane-binding proteins 200 kDa (MBP 200) and 235 kDa (MBP 235), that can be reduced into a single active ligand-binding species with intermediate mobility (MBP 200R). Expressed in peripheral blood leukocytes &gt; bone marrow = spleen &gt; lymph node, and only faintly visible in appendix and thymus. Expressed in the brain, heart, kidney, liver, lung, pancreas, and placenta. Expressed primarily by reticuloendothelial cells: monocytes, macrophages, and endothelial cells. Expressed in atherosclerotic lesion foam cells.

It is found in the cell membrane. Its function is as follows. Macrophage receptor that binds to the apolipoprotein B48 (APOB) of dietary triglyceride (TG)-rich lipoproteins (TRL) or to a like domain of APOB in hypertriglyceridemic very low density lipoprotein (HTG-VLDL). Binds and internalizes TRL when out of the context of the macrophage. May provide essential lipids to reticuloendothelial cells. Could also be involved in foam cell formation with elevated TRL and remnant lipoprotein (RLP). Mediates the rapid high-affinity uptake of chylomicrons (CM), HTG-VLDL, and trypsinized (tryp) VLDL devoid of APOE in vitro in macrophages. In Homo sapiens (Human), this protein is Apolipoprotein B receptor.